Reading from the N-terminus, the 789-residue chain is Glycerol-3-phosphate acyltransferase (789 aa).

The HXXXXD motif signature appears at 276–281 (HRSYID).

Belongs to the GPAT/DAPAT family.

The protein resides in the cell membrane. It carries out the reaction sn-glycerol 3-phosphate + an acyl-CoA = a 1-acyl-sn-glycero-3-phosphate + CoA. It functions in the pathway phospholipid metabolism; CDP-diacylglycerol biosynthesis; CDP-diacylglycerol from sn-glycerol 3-phosphate: step 1/3. The protein is Glycerol-3-phosphate acyltransferase (plsB) of Mycobacterium tuberculosis (strain CDC 1551 / Oshkosh).